The sequence spans 142 residues: Large ribosomal subunit protein uL11 (142 aa).

It belongs to the universal ribosomal protein uL11 family. As to quaternary structure, part of the ribosomal stalk of the 50S ribosomal subunit. Interacts with L10 and the large rRNA to form the base of the stalk. L10 forms an elongated spine to which L12 dimers bind in a sequential fashion forming a multimeric L10(L12)X complex. In terms of processing, one or more lysine residues are methylated.

Functionally, forms part of the ribosomal stalk which helps the ribosome interact with GTP-bound translation factors. The sequence is that of Large ribosomal subunit protein uL11 from Mannheimia succiniciproducens (strain KCTC 0769BP / MBEL55E).